The primary structure comprises 910 residues: DNA mismatch repair protein MutS (910 aa).

Basic and acidic residues predominate over residues 1-11 (MEAKVEEKEPE). Positions 1–21 (MEAKVEEKEPEPVENAGPDAP) are disordered. Position 658–665 (658–665 (GPNMGGKS)) interacts with ATP.

Belongs to the DNA mismatch repair MutS family.

This protein is involved in the repair of mismatches in DNA. It is possible that it carries out the mismatch recognition step. This protein has a weak ATPase activity. This chain is DNA mismatch repair protein MutS, found in Brucella abortus (strain 2308).